The chain runs to 631 residues: Probable potassium transport system protein Kup 1 (631 aa).

12 helical membrane-spanning segments follow: residues L16–Y36, V58–V78, V109–P129, P145–I165, V173–I193, G219–L239, W255–L275, L288–A308, I345–F365, G370–V390, P402–A422, and V427–T447.

Belongs to the HAK/KUP transporter (TC 2.A.72) family.

The protein resides in the cell inner membrane. It carries out the reaction K(+)(in) + H(+)(in) = K(+)(out) + H(+)(out). In terms of biological role, transport of potassium into the cell. Likely operates as a K(+):H(+) symporter. The protein is Probable potassium transport system protein Kup 1 of Geobacter sulfurreducens (strain ATCC 51573 / DSM 12127 / PCA).